Reading from the N-terminus, the 271-residue chain is Ribosomal RNA small subunit methyltransferase A (271 aa).

S-adenosyl-L-methionine-binding residues include His11, Leu13, Gly38, Glu58, Asp86, and Asn101.

Belongs to the class I-like SAM-binding methyltransferase superfamily. rRNA adenine N(6)-methyltransferase family. RsmA subfamily.

It is found in the cytoplasm. The catalysed reaction is adenosine(1518)/adenosine(1519) in 16S rRNA + 4 S-adenosyl-L-methionine = N(6)-dimethyladenosine(1518)/N(6)-dimethyladenosine(1519) in 16S rRNA + 4 S-adenosyl-L-homocysteine + 4 H(+). Specifically dimethylates two adjacent adenosines (A1518 and A1519) in the loop of a conserved hairpin near the 3'-end of 16S rRNA in the 30S particle. May play a critical role in biogenesis of 30S subunits. This Helicobacter pylori (strain Shi470) protein is Ribosomal RNA small subunit methyltransferase A.